A 621-amino-acid polypeptide reads, in one-letter code: tRNA uridine 5-carboxymethylaminomethyl modification enzyme MnmG (621 aa).

Residue glycine 8–glycine 13 coordinates FAD. Residue glycine 269 to phenylalanine 283 coordinates NAD(+).

This sequence belongs to the MnmG family. In terms of assembly, homodimer. Heterotetramer of two MnmE and two MnmG subunits. It depends on FAD as a cofactor.

It localises to the cytoplasm. Functionally, NAD-binding protein involved in the addition of a carboxymethylaminomethyl (cmnm) group at the wobble position (U34) of certain tRNAs, forming tRNA-cmnm(5)s(2)U34. This chain is tRNA uridine 5-carboxymethylaminomethyl modification enzyme MnmG, found in Chlorobium phaeovibrioides (strain DSM 265 / 1930) (Prosthecochloris vibrioformis (strain DSM 265)).